The following is a 795-amino-acid chain: Protocadherin beta-4 (795 aa).

The first 27 residues, 1–27 (MKKLGRIHPNRQVLAFILMVFLSQVRL), serve as a signal peptide directing secretion. The Extracellular portion of the chain corresponds to 28–689 (EPIRYSVLEE…SQADSLTVYL (662 aa)). 5 consecutive Cadherin domains span residues 34–132 (VLEE…SPVF), 137–241 (VLLK…APEF), 246–346 (YGVQ…PPEL), 351–450 (LTSS…APAF), and 455–560 (YTLF…SPFV). N-linked (GlcNAc...) asparagine glycosylation occurs at Asn183. A glycan (N-linked (GlcNAc...) asparagine) is linked at Asn417. Residue Asn566 is glycosylated (N-linked (GlcNAc...) asparagine). In terms of domain architecture, Cadherin 6 spans 567–670 (GSAPCTELVP…LVDGFSQPYL (104 aa)). The helical transmembrane segment at 690-710 (VVALASVSSLFLFSVLLFVAV) threads the bilayer. The Cytoplasmic segment spans residues 711-795 (RLCRRSRAAS…PKFRNSLVFS (85 aa)).

It localises to the cell membrane. Potential calcium-dependent cell-adhesion protein. May be involved in the establishment and maintenance of specific neuronal connections in the brain. The chain is Protocadherin beta-4 (PCDHB4) from Pan troglodytes (Chimpanzee).